The following is a 497-amino-acid chain: Guanosine-5'-triphosphate,3'-diphosphate pyrophosphatase (497 aa).

This sequence belongs to the GppA/Ppx family. GppA subfamily.

The catalysed reaction is guanosine 3'-diphosphate 5'-triphosphate + H2O = guanosine 3',5'-bis(diphosphate) + phosphate + H(+). It participates in purine metabolism; ppGpp biosynthesis; ppGpp from GTP: step 2/2. Its function is as follows. Catalyzes the conversion of pppGpp to ppGpp. Guanosine pentaphosphate (pppGpp) is a cytoplasmic signaling molecule which together with ppGpp controls the 'stringent response', an adaptive process that allows bacteria to respond to amino acid starvation, resulting in the coordinated regulation of numerous cellular activities. In Vibrio atlanticus (strain LGP32) (Vibrio splendidus (strain Mel32)), this protein is Guanosine-5'-triphosphate,3'-diphosphate pyrophosphatase.